The following is a 470-amino-acid chain: Probable glycosyltransferase At3g07620 (470 aa).

The Cytoplasmic segment spans residues 1–7 (MRDYIPK). A helical; Signal-anchor transmembrane segment spans residues 8-28 (YLNAFLLAFATFAVGFAIFIA). Topologically, residues 29–470 (KDSNSSSHLY…WLRRLNVKLL (442 aa)) are lumenal. N-linked (GlcNAc...) asparagine glycosylation is found at N32, N73, N105, N236, N274, and N299.

It belongs to the glycosyltransferase 47 family.

It is found in the golgi apparatus membrane. May be involved in cell wall biosynthesis. In Arabidopsis thaliana (Mouse-ear cress), this protein is Probable glycosyltransferase At3g07620.